The sequence spans 166 residues: MANNEQKRDEGYIEKLVQVNRVAKTVKGGRIFTFTALTVVGDGKGRVGFGRGKSREVPAAIQKAMEAARRNMIQVDLSGTTLQYPVKSAHGASRVYMQPASEGTGIIAGGAMRAVLEVAGVQNVLAKCYGSTNPVNVVYATFKGLKEMQSPESVAAKRGKSVEEIL.

An S5 DRBM domain is found at 12 to 75; the sequence is YIEKLVQVNR…EAARRNMIQV (64 aa).

The protein belongs to the universal ribosomal protein uS5 family. As to quaternary structure, part of the 30S ribosomal subunit. Contacts proteins S4 and S8.

Functionally, with S4 and S12 plays an important role in translational accuracy. Located at the back of the 30S subunit body where it stabilizes the conformation of the head with respect to the body. The protein is Small ribosomal subunit protein uS5 of Azotobacter vinelandii (strain DJ / ATCC BAA-1303).